The following is a 140-amino-acid chain: Tail assembly protein G (140 aa).

The tract at residues 114–140 (IDEPTSSGEERNEPAEPVTAEKPSPVS) is disordered.

It belongs to the lambda-like tail assembly protein family. Interacts with the tail assembly protein GT and the tape measure protein.

It localises to the host cytoplasm. Its function is as follows. Promotes tail assembly by creating a scaffold for the tail tube proteins. Tail assembly proteins G and GT probably wrap the linear tape measure protein to create a tail assembly scaffold. This allows the polymerization of the tail tube protein, during which G and GT are released, therefore they are absent in the mature virion. The tail assembly protein GT is produced by a rare -1 ribosomal frameshift. The ratio of translated G/GT is about 20, and this ratio is important for proper tail assembly. This is Tail assembly protein G from Escherichia coli (Bacteriophage N15).